Consider the following 334-residue polypeptide: Ribosomal RNA small subunit methyltransferase C (334 aa).

Belongs to the methyltransferase superfamily. RsmC family. Monomer.

The protein localises to the cytoplasm. It carries out the reaction guanosine(1207) in 16S rRNA + S-adenosyl-L-methionine = N(2)-methylguanosine(1207) in 16S rRNA + S-adenosyl-L-homocysteine + H(+). Functionally, specifically methylates the guanine in position 1207 of 16S rRNA in the 30S particle. In Idiomarina loihiensis (strain ATCC BAA-735 / DSM 15497 / L2-TR), this protein is Ribosomal RNA small subunit methyltransferase C.